Here is a 394-residue protein sequence, read N- to C-terminus: tRNA-specific adenosine deaminase 1 (394 aa).

The A to I editase domain occupies 54–388 (SLGCGTKCIG…TKKPHELLDF (335 aa)). Zn(2+) is bound at residue His-78. The active-site Proton donor is Glu-80. Residues Arg-84 and Arg-85 each coordinate 1D-myo-inositol hexakisphosphate. 2 residues coordinate Zn(2+): Cys-127 and Cys-191. 5 residues coordinate 1D-myo-inositol hexakisphosphate: Lys-194, Arg-197, Lys-320, Lys-357, and Lys-381.

The protein belongs to the ADAT1 family. The cofactor is 1D-myo-inositol hexakisphosphate. Widely expressed in early embryos, and later concentrates in the central nervous system.

It carries out the reaction adenosine(37) in tRNA(Ala) + H2O + H(+) = inosine(37) in tRNA(Ala) + NH4(+). Its function is as follows. Specifically deaminates adenosine-37 to inosine in tRNA-Ala. The chain is tRNA-specific adenosine deaminase 1 from Drosophila melanogaster (Fruit fly).